We begin with the raw amino-acid sequence, 114 residues long: Large ribosomal subunit protein uL18 (114 aa).

It belongs to the universal ribosomal protein uL18 family. Part of the 50S ribosomal subunit; part of the 5S rRNA/L5/L18/L25 subcomplex. Contacts the 5S and 23S rRNAs.

This is one of the proteins that bind and probably mediate the attachment of the 5S RNA into the large ribosomal subunit, where it forms part of the central protuberance. This Porphyromonas gingivalis (strain ATCC 33277 / DSM 20709 / CIP 103683 / JCM 12257 / NCTC 11834 / 2561) protein is Large ribosomal subunit protein uL18.